Consider the following 475-residue polypeptide: Ankyrin repeat, SAM and basic leucine zipper domain-containing protein 1 (475 aa).

The segment covering 1-10 has biased composition (low complexity); the sequence is MAAGALRGLA. Positions 1 to 23 are disordered; sequence MAAGALRGLAVAGGGESSESEDD. Phosphoserine occurs at positions 17, 18, and 20. ANK repeat units lie at residues 45–74, 78–107, 110–144, 148–177, 181–210, and 214–243; these read EKNETFKKALTTGDISLVQELLDSGISVDS, YGWTPLMYAASVANVELVRVLLDRGANASF, DKQTILITACSARGLEEQILKCVELLLSRNADPNV, RLMTPIMYAARDGHPQVVALLVAHGAEVNT, NGYTALTWAARQGHKNVVLKLLELGANKML, and DGKIPSEIAKRNKHLEIFNFLSLTLNPLEG. Residues 272 to 334 enclose the SAM domain; the sequence is SYTAFGDLEI…KILSALKELE (63 aa).

As to quaternary structure, interacts with DDX4, PIWIL1, RANBP9 and TDRD1.

Its subcellular location is the cytoplasm. Plays a central role during spermatogenesis by repressing transposable elements and preventing their mobilization, which is essential for the germline integrity. Acts via the piRNA metabolic process, which mediates the repression of transposable elements during meiosis by forming complexes composed of piRNAs and Piwi proteins and governs the methylation and subsequent repression of transposons. Its association with pi-bodies suggests a participation in the primary piRNAs metabolic process. Required prior to the pachytene stage to facilitate the production of multiple types of piRNAs, including those associated with repeats involved in the regulation of retrotransposons. May act by mediating protein-protein interactions during germ cell maturation. This is Ankyrin repeat, SAM and basic leucine zipper domain-containing protein 1 (ASZ1) from Otolemur garnettii (Small-eared galago).